A 251-amino-acid chain; its full sequence is Putative cysteine-rich repeat secretory protein 36 (251 aa).

Positions 1 to 28 are cleaved as a signal peptide; that stretch reads MHSSYSLSKCLVCFTILAIQTLIRRVSS. 2 consecutive Gnk2-homologous domains span residues 35–139 and 144–248; these read YLNH…NSPP and YENT…LYPF.

It belongs to the cysteine-rich repeat secretory protein family.

Its subcellular location is the secreted. The polypeptide is Putative cysteine-rich repeat secretory protein 36 (CRRSP36) (Arabidopsis thaliana (Mouse-ear cress)).